A 126-amino-acid chain; its full sequence is MASIEALVEEIGKLSLTEASELVKALEDKFGVSAAPAVFAGAAAAAPGGEAEAKEEQTEFDVELKAVGANKINVIKAVRSITGLGLKEAKEMVDGAPKVVKEAVSKEEAEKVAKELKDAGAEVELK.

It belongs to the bacterial ribosomal protein bL12 family. As to quaternary structure, homodimer. Part of the ribosomal stalk of the 50S ribosomal subunit. Forms a multimeric L10(L12)X complex, where L10 forms an elongated spine to which 2 to 4 L12 dimers bind in a sequential fashion. Binds GTP-bound translation factors.

Its function is as follows. Forms part of the ribosomal stalk which helps the ribosome interact with GTP-bound translation factors. Is thus essential for accurate translation. This chain is Large ribosomal subunit protein bL12, found in Chlorobium phaeobacteroides (strain BS1).